The sequence spans 302 residues: Methionyl-tRNA formyltransferase (302 aa).

Residue 109–112 (SILP) participates in (6S)-5,6,7,8-tetrahydrofolate binding.

This sequence belongs to the Fmt family.

The enzyme catalyses L-methionyl-tRNA(fMet) + (6R)-10-formyltetrahydrofolate = N-formyl-L-methionyl-tRNA(fMet) + (6S)-5,6,7,8-tetrahydrofolate + H(+). Functionally, attaches a formyl group to the free amino group of methionyl-tRNA(fMet). The formyl group appears to play a dual role in the initiator identity of N-formylmethionyl-tRNA by promoting its recognition by IF2 and preventing the misappropriation of this tRNA by the elongation apparatus. The polypeptide is Methionyl-tRNA formyltransferase (Campylobacter hominis (strain ATCC BAA-381 / DSM 21671 / CCUG 45161 / LMG 19568 / NCTC 13146 / CH001A)).